Consider the following 104-residue polypeptide: Large ribosomal subunit protein uL24 (104 aa).

Over residues 85–96 the composition is skewed to basic and acidic residues; it reads IKRELGAKEKAR. The tract at residues 85-104 is disordered; sequence IKRELGAKEKARADRRKTAK.

The protein belongs to the universal ribosomal protein uL24 family. As to quaternary structure, part of the 50S ribosomal subunit.

One of two assembly initiator proteins, it binds directly to the 5'-end of the 23S rRNA, where it nucleates assembly of the 50S subunit. Its function is as follows. One of the proteins that surrounds the polypeptide exit tunnel on the outside of the subunit. The sequence is that of Large ribosomal subunit protein uL24 from Anaeromyxobacter sp. (strain Fw109-5).